The sequence spans 206 residues: uncharacterized protein (206 aa).

The N-terminal stretch at 1–18 is a signal peptide; the sequence is MSSLVLIPCALLTQGIYA.

This is an uncharacterized protein from Acanthamoeba polyphaga mimivirus (APMV).